The following is a 1271-amino-acid chain: Period circadian protein (1271 aa).

Over residues 1-14 (MEGESTESTQNTKV) the composition is skewed to polar residues. Residues 1 to 102 (MEGESTESTQ…AEEQPHSSGT (102 aa)) form a disordered region. Low complexity predominate over residues 15–46 (SDSAYSNSCSNSQSQRSGSSKSMLSGSHSSGS). Positions 65 to 78 (KRNKEKSRKKKKAK) match the Nuclear localization signal motif. Positions 65–78 (KRNKEKSRKKKKAK) are enriched in basic residues. Polar residues predominate over residues 80–90 (TQAQATISSSL). PAS domains are found at residues 189 to 259 (TGPA…IPIA) and 339 to 409 (YRVP…MKKG). The segment at 596–660 (APVEVDPPKV…TNTSNAGTGT (65 aa)) is disordered. 3 tandem repeats follow at residues 657–658 (GT), 659–660 (GT), and 661–662 (GT). Residues 657 to 677 (GTGTGTVTGTGTIIATSGTGT) are 8 X 2 AA approximate tandem repeats of G-T. The 4; approximate repeat unit spans residues 663–664 (VT). Repeat copies occupy residues 665 to 666 (GT), 667 to 668 (GT), 674 to 675 (GT), and 676 to 677 (GT). 2 stretches are compositionally biased toward polar residues: residues 746 to 772 (GAEN…NSAA) and 781 to 803 (GPDN…SGAE). Disordered stretches follow at residues 746-913 (GAEN…VEKN), 928-956 (EYSS…PKQQ), 1014-1050 (PAPG…QQAA), 1143-1191 (TPAQ…NSNQ), and 1227-1271 (KTTD…HGDG). Basic and acidic residues-rich tracts occupy residues 805–822 (SRAE…HPRP) and 831–841 (RPDKTGPDKSG). The segment covering 864–884 (QDTRTTAGTPDSPPVSLTESL) has biased composition (polar residues). Composition is skewed to basic and acidic residues over residues 885–896 (LNKHNDEMEKFM) and 903–913 (SRGDRRTVEKN). Positions 1014–1023 (PAPGALSPTP) are enriched in low complexity. Over residues 1025-1036 (NQKHHHHAHQHA) the composition is skewed to basic residues. Positions 1143 to 1167 (TPAQLQRPSSQDTSVKTEPASNATP) are enriched in polar residues. The span at 1257–1271 (IMEHPEEDQTQHGDG) shows a compositional bias: basic and acidic residues.

As to quaternary structure, forms a heterodimer with timeless (TIM); the complex then translocates into the nucleus. Phosphorylated with a circadian rhythmicity, probably by the double-time protein (dbt). Phosphorylation could be implicated in the stability of per monomer and in the formation of heterodimer per-tim.

The protein localises to the nucleus. Its subcellular location is the cytoplasm. It is found in the perinuclear region. Essential for biological clock functions. Determines the period length of circadian and ultradian rhythms; an increase in PER dosage leads to shortened circadian rhythms and a decrease leads to lengthened circadian rhythms. Essential for the circadian rhythmicity of locomotor activity, eclosion behavior, and for the rhythmic component of the male courtship song that originates in the thoracic nervous system. The biological cycle depends on the rhythmic formation and nuclear localization of the TIM-PER complex. Light induces the degradation of TIM, which promotes elimination of PER. Nuclear activity of the heterodimer coordinatively regulates PER and TIM transcription through a negative feedback loop. Behaves as a negative element in circadian transcriptional loop. Does not appear to bind DNA, suggesting indirect transcriptional inhibition. This is Period circadian protein (per) from Drosophila pseudoobscura pseudoobscura (Fruit fly).